The primary structure comprises 339 residues: Ferredoxin--NADP reductase (339 aa).

Asp32, Gln40, Tyr45, Val85, Phe120, Asp287, and Thr327 together coordinate FAD.

This sequence belongs to the ferredoxin--NADP reductase type 2 family. In terms of assembly, homodimer. Requires FAD as cofactor.

The catalysed reaction is 2 reduced [2Fe-2S]-[ferredoxin] + NADP(+) + H(+) = 2 oxidized [2Fe-2S]-[ferredoxin] + NADPH. The chain is Ferredoxin--NADP reductase from Wolbachia sp. subsp. Brugia malayi (strain TRS).